Here is a 318-residue protein sequence, read N- to C-terminus: Cuticle collagen dpy-7 (318 aa).

4 triple-helical region regions span residues 101–130, 147–206, 209–235, and 240–278; these read GPIG…DGLD, GPPG…PGDD, GGTG…NGLP, and GPPG…PGGH. A disordered region spans residues 101-318; it reads GPIGPPGVSG…GYSGGGYGKK (218 aa). Residues 187-204 show a composition bias toward low complexity; that stretch reads PQGEPGEQGEPGIKGPPG. Pro residues-rich tracts occupy residues 216–228 and 250–268; these read PPGP…PKGP and PPGP…PFGP. A compositionally biased stretch (gly residues) spans 309-318; that stretch reads GYSGGGYGKK.

It belongs to the cuticular collagen family. As to quaternary structure, collagen polypeptide chains are complexed within the cuticle by disulfide bonds and other types of covalent cross-links.

Functionally, nematode cuticles are composed largely of collagen-like proteins. The cuticle functions both as an exoskeleton and as a barrier to protect the worm from its environment. Mutations in dpy-7 affects the body shape. This chain is Cuticle collagen dpy-7 (dpy-7), found in Caenorhabditis elegans.